We begin with the raw amino-acid sequence, 284 residues long: Undecaprenyl-diphosphatase (284 aa).

Helical transmembrane passes span 1-21 (MNWL…FLPV), 43-63 (ITAF…LYFW), 88-108 (YTLG…GLVF), 116-136 (LSSL…MWLG), 149-169 (IGIV…LFPG), 193-213 (LSFF…SVSA), 225-245 (VAIG…VAYV), and 259-279 (FTGF…LILS).

Belongs to the UppP family.

Its subcellular location is the cell membrane. The catalysed reaction is di-trans,octa-cis-undecaprenyl diphosphate + H2O = di-trans,octa-cis-undecaprenyl phosphate + phosphate + H(+). Catalyzes the dephosphorylation of undecaprenyl diphosphate (UPP). Confers resistance to bacitracin. The sequence is that of Undecaprenyl-diphosphatase from Cutibacterium acnes (strain DSM 16379 / KPA171202) (Propionibacterium acnes).